The chain runs to 594 residues: Actin-histidine N-methyltransferase (594 aa).

The disordered stretch occupies residues 1 to 22; that stretch reads MGKKSRVKTQKSGTGATATVSP. A compositionally biased stretch (polar residues) spans 10–20; the sequence is QKSGTGATATV. S-adenosyl-L-methionine is bound by residues Arg-75, 104–106, Arg-254, 275–279, and 325–327; these read EGF, DMCNH, and SGF. An SET domain is found at 94–314; the sequence is EGFEMVNFKE…AGEQIYIFYG (221 aa). Position 513 is a phosphoserine (Ser-513). The interval 549–594 is disordered; sequence ENGLVNGENSIPNGTRSENESLNQESKRAVEDAKGSSSDSTAGVKE. Positions 555-572 are enriched in polar residues; that stretch reads GENSIPNGTRSENESLNQ. The segment covering 573 to 582 has biased composition (basic and acidic residues); that stretch reads ESKRAVEDAK. Over residues 583–594 the composition is skewed to polar residues; it reads GSSSDSTAGVKE.

This sequence belongs to the class V-like SAM-binding methyltransferase superfamily. SETD3 actin-histidine methyltransferase family. In terms of assembly, interacts with MYOD1. In terms of processing, phosphorylated by GSK3B, which is required for recognition by the SCF(FBXW7) complex and subsequent degradation. Post-translationally, ubiquitinated by the SCF(FBXW7) complex following phosphorylation by GSK3B, leading to its degradation by the proteasome.

The protein localises to the cytoplasm. Its subcellular location is the nucleus. It catalyses the reaction L-histidyl-[protein] + S-adenosyl-L-methionine = N(tele)-methyl-L-histidyl-[protein] + S-adenosyl-L-homocysteine + H(+). In terms of biological role, protein-histidine N-methyltransferase that specifically mediates 3-methylhistidine (tele-methylhistidine) methylation of actin at 'His-73'. Histidine methylation of actin is required for smooth muscle contraction of the laboring uterus during delivery. Does not have protein-lysine N-methyltransferase activity and probably only catalyzes histidine methylation of actin. The sequence is that of Actin-histidine N-methyltransferase from Homo sapiens (Human).